The following is a 358-amino-acid chain: MDDYVIRREGKAVFYAPNPKKYDIYSAPVFYNPAMEKNRTLSVLLLKVAGAQMGGGLTVCEPLSGTGIRGIRYVIESGVVGKLILNDLSKEAVHVIQKNLSINGVEADVYNEDANVLLHKLRGQCDVVDVDPFGSPAPFLSAAFRALKNEGIVCATATDTAVLVGRYPRKCLRRYGSVIRKSPFYLEMGLRNLVGYVARIAASEDFAIRPLLSYWEGHYFRTCVYAVKSAKDADDMLQRDVGYVEYRRYRKVTRRQSEYTSGPVWIGELGDPSIAFFMAREGQYSDFLKLLEEEYSVSLPWFYKLPEFAVDGKSPTLEEAMAALRRAGVYAARTHMASDGFKAEATYGEVERVLRRVT.

Residues 5 to 354 (VIRREGKAVF…ATYGEVERVL (350 aa)) enclose the Trm1 methyltransferase domain. S-adenosyl-L-methionine is bound by residues arginine 39, arginine 69, aspartate 87, aspartate 113, and alanine 114.

The protein belongs to the class I-like SAM-binding methyltransferase superfamily. Trm1 family.

The catalysed reaction is guanosine(26) in tRNA + 2 S-adenosyl-L-methionine = N(2)-dimethylguanosine(26) in tRNA + 2 S-adenosyl-L-homocysteine + 2 H(+). Dimethylates a single guanine residue at position 26 of a number of tRNAs using S-adenosyl-L-methionine as donor of the methyl groups. This is tRNA (guanine(26)-N(2))-dimethyltransferase from Pyrobaculum calidifontis (strain DSM 21063 / JCM 11548 / VA1).